Reading from the N-terminus, the 393-residue chain is Pyrin and HIN domain-containing protein 1-like (393 aa).

The Pyrin domain maps to 1–87 (MVNEYKRIVL…ANKLKNEKAK (87 aa)). Residues 82-188 (KNEKAKAKRK…TPTRSSSRIL (107 aa)) form a disordered region. Residues 87–102 (KAKRKGKGKRKTAAKR) are compositionally biased toward basic residues. Composition is skewed to polar residues over residues 108-118 (PSTSQPMSTTN) and 126-151 (GRST…AIQI). Residues 152–169 (SPTIASSSGQTSSRSSET) are compositionally biased toward low complexity. The segment covering 170 to 186 (LQSIIQSPETPTRSSSR) has biased composition (polar residues). In terms of domain architecture, HIN-200 spans 219 to 393 (NVPKEPSEEN…NPGDKLRLML (175 aa)).

This sequence belongs to the HIN-200 family.

It is found in the nucleus. In Mus musculus (Mouse), this protein is Pyrin and HIN domain-containing protein 1-like.